Reading from the N-terminus, the 354-residue chain is Galactoside alpha-(1,2)-fucosyltransferase 2 (354 aa).

At 1–22 the chain is on the cytoplasmic side; the sequence is MRFAPDYVLCPPTATRRLRATH. The chain crosses the membrane as a helical; Signal-anchor for type II membrane protein span at residues 23 to 43; it reads PSVSTIYFLFTIFVVSTVFHC. Over 44-354 the chain is Lumenal; the sequence is HQRLALVPAP…NMGRALWSGL (311 aa). N197, N291, and N317 each carry an N-linked (GlcNAc...) asparagine glycan.

The protein belongs to the glycosyltransferase 11 family. As to expression, salivary and lactating mammary glands.

Its subcellular location is the golgi apparatus. It localises to the golgi stack membrane. The catalysed reaction is a beta-D-galactosyl-(1-&gt;3)-N-acetyl-beta-D-glucosaminyl derivative + GDP-beta-L-fucose = an alpha-L-Fuc-(1-&gt;2)-beta-D-Gal-(1-&gt;3)-beta-D-GlcNAc derivative + GDP + H(+). It carries out the reaction a beta-D-galactosyl-(1-&gt;4)-N-acetyl-beta-D-glucosaminyl derivative + GDP-beta-L-fucose = an alpha-L-Fuc-(1-&gt;2)-beta-D-Gal-(1-&gt;4)-beta-D-GlcNAc derivative + GDP + H(+). It catalyses the reaction a neolactoside nLc4Cer + GDP-beta-L-fucose = a neolactoside IV(2)-alpha-Fuc-nLc4Cer + GDP + H(+). The enzyme catalyses a neolactoside nLc4Cer(d18:1(4E)) + GDP-beta-L-fucose = a neolactoside IV(2)-alpha-Fuc-nLc4Cer(d18:1(4E)) + GDP + H(+). The catalysed reaction is a ganglioside GM1 + GDP-beta-L-fucose = a ganglioside Fuc-GM1 + GDP + H(+). It carries out the reaction a ganglioside GA1 + GDP-beta-L-fucose = a ganglioside Fuc-GA1 + GDP + H(+). It catalyses the reaction Lc4Cer + GDP-beta-L-fucose = alpha-L-fucosyl-(1-&gt;2)-beta-D-galactosyl-(1-&gt;3)-N-acetyl-beta-D-glucosaminyl-(1-&gt;3)-beta-D-galactosyl-(1-&gt;4)-beta-D-glucosyl-(1&lt;-&gt;1')-ceramide + GDP + H(+). The enzyme catalyses a beta-D-Gal-(1-&gt;3)-beta-D-GlcNAc-(1-&gt;3)-beta-D-Gal-(1-&gt;4)-beta-D-Glc-(1&lt;-&gt;1')-Cer(d18:1(4E)) + GDP-beta-L-fucose = alpha-L-fucosyl-(1-&gt;2)- beta-D-galactosyl-(1-&gt;3)-N-acetyl-beta-D-glucosaminyl-(1-&gt;3)-beta-D-galactosyl-(1-&gt;4)-beta-D-glucosyl-(1&lt;-&gt;1')-N-acylsphing-4-enine + GDP + H(+). The catalysed reaction is a ganglioside GD1b + GDP-beta-L-fucose = a ganglioside Fuc-GD1b + GDP + H(+). It carries out the reaction a ganglioside GM1 (d18:1(4E)) + GDP-beta-L-fucose = a ganglioside Fuc-GM1 (d18:1(4E)) + GDP + H(+). It catalyses the reaction a globoside GalGb4Cer (d18:1(4E)) + GDP-beta-L-fucose = a globoside Globo-H (d18:1(4E)) + GDP + H(+). The enzyme catalyses a lactoside III(4)-a-Fuc-Lc4Cer + GDP-beta-L-fucose = a lactoside IV(2),III(4)-a-[Fuc]2-Lc4Cer + GDP + H(+). The catalysed reaction is beta-D-galactosyl-(1-&gt;3)-N-acetyl-D-galactosamine + GDP-beta-L-fucose = alpha-L-fucosyl-(1-&gt;2)-beta-D-galactosyl-(1-&gt;3)-N-acetyl-D-galactosamine + GDP + H(+). Its pathway is protein modification; protein glycosylation. Catalyzes the transfer of L-fucose, from a guanosine diphosphate-beta-L-fucose, to the terminal galactose on both O- and N-linked glycans chains of cell surface glycoproteins and glycolipids and the resulting epitope regulates several processes such as cell-cell interaction including host-microbe interaction, cell surface expression and cell proliferation. Preferentially fucosylates gangliosides GA1 and GM1 in the antrum, cecum and colon and in the female reproductive organs. Fucosylated host glycoproteins or glycolipids mediate interaction with intestinal microbiota influencing its composition. Creates a soluble precursor oligosaccharide FuC-alpha ((1,2)Galbeta-) called the H antigen which is an essential substrate for the final step in the soluble ABO blood group antigen synthesis pathway. This chain is Galactoside alpha-(1,2)-fucosyltransferase 2, found in Oryctolagus cuniculus (Rabbit).